We begin with the raw amino-acid sequence, 365 residues long: DNA replication and repair protein RecF (365 aa).

30 to 37 (GANGQGKT) is an ATP binding site.

It belongs to the RecF family.

It is found in the cytoplasm. Functionally, the RecF protein is involved in DNA metabolism; it is required for DNA replication and normal SOS inducibility. RecF binds preferentially to single-stranded, linear DNA. It also seems to bind ATP. This is DNA replication and repair protein RecF from Geobacter sulfurreducens (strain ATCC 51573 / DSM 12127 / PCA).